Reading from the N-terminus, the 135-residue chain is Small ribosomal subunit protein uS9 (135 aa).

The span at 108–118 shows a compositional bias: basic and acidic residues; it reads VGDSRRTEPHK. The disordered stretch occupies residues 108–135; sequence VGDSRRTEPHKPNRSTKGPRAKRQKSYR. Over residues 119-135 the composition is skewed to basic residues; the sequence is PNRSTKGPRAKRQKSYR.

The protein belongs to the universal ribosomal protein uS9 family. As to quaternary structure, part of the 30S ribosomal subunit.

The sequence is that of Small ribosomal subunit protein uS9 from Thermococcus kodakarensis (strain ATCC BAA-918 / JCM 12380 / KOD1) (Pyrococcus kodakaraensis (strain KOD1)).